A 204-amino-acid chain; its full sequence is ATP-dependent Clp protease proteolytic subunit (204 aa).

Catalysis depends on S100, which acts as the Nucleophile. H125 is a catalytic residue.

Belongs to the peptidase S14 family. Fourteen ClpP subunits assemble into 2 heptameric rings which stack back to back to give a disk-like structure with a central cavity, resembling the structure of eukaryotic proteasomes.

The protein resides in the cytoplasm. It carries out the reaction Hydrolysis of proteins to small peptides in the presence of ATP and magnesium. alpha-casein is the usual test substrate. In the absence of ATP, only oligopeptides shorter than five residues are hydrolyzed (such as succinyl-Leu-Tyr-|-NHMec, and Leu-Tyr-Leu-|-Tyr-Trp, in which cleavage of the -Tyr-|-Leu- and -Tyr-|-Trp bonds also occurs).. In terms of biological role, cleaves peptides in various proteins in a process that requires ATP hydrolysis. Has a chymotrypsin-like activity. Plays a major role in the degradation of misfolded proteins. In Anaeromyxobacter sp. (strain Fw109-5), this protein is ATP-dependent Clp protease proteolytic subunit.